Reading from the N-terminus, the 104-residue chain is Guanidinium exporter (104 aa).

Residue M1 is a topological domain, cytoplasmic. The helical transmembrane segment at 2-19 (AWIILVIAGLLEVIWAIG) threads the bilayer. Topologically, residues 20–28 (LKYSHGFSR) are periplasmic. The chain crosses the membrane as a helical span at residues 29 to 48 (LTPSIITLVAMAASVFLLAY). The Cytoplasmic portion of the chain corresponds to 49 to 54 (AMKSLP). A helical transmembrane segment spans residues 55–77 (AGTAYAVWTGIGAVGTAILGIVL). Residues 78 to 81 (LGES) lie on the Periplasmic side of the membrane. The chain crosses the membrane as a helical span at residues 82 to 100 (ASLARILSLGLILAGIIGL). The Cytoplasmic segment spans residues 101-104 (KLAS).

The protein belongs to the drug/metabolite transporter (DMT) superfamily. Small multidrug resistance (SMR) (TC 2.A.7.1) family. Gdx/SugE subfamily.

Its subcellular location is the cell inner membrane. Its function is as follows. Guanidinium ion exporter. Couples guanidinium export to the proton motive force, exchanging one guanidinium ion for two protons. The polypeptide is Guanidinium exporter (Yersinia pestis).